Reading from the N-terminus, the 379-residue chain is Succinyl-diaminopimelate desuccinylase (379 aa).

Position 70 (His-70) interacts with Zn(2+). The active site involves Asp-72. Asp-103 is a Zn(2+) binding site. Glu-137 serves as the catalytic Proton acceptor. 3 residues coordinate Zn(2+): Glu-138, Glu-166, and His-352.

It belongs to the peptidase M20A family. DapE subfamily. Homodimer. Requires Zn(2+) as cofactor. Co(2+) serves as cofactor.

The catalysed reaction is N-succinyl-(2S,6S)-2,6-diaminopimelate + H2O = (2S,6S)-2,6-diaminopimelate + succinate. It participates in amino-acid biosynthesis; L-lysine biosynthesis via DAP pathway; LL-2,6-diaminopimelate from (S)-tetrahydrodipicolinate (succinylase route): step 3/3. Functionally, catalyzes the hydrolysis of N-succinyl-L,L-diaminopimelic acid (SDAP), forming succinate and LL-2,6-diaminopimelate (DAP), an intermediate involved in the bacterial biosynthesis of lysine and meso-diaminopimelic acid, an essential component of bacterial cell walls. The protein is Succinyl-diaminopimelate desuccinylase of Burkholderia orbicola (strain MC0-3).